A 264-amino-acid polypeptide reads, in one-letter code: Thiazole synthase (264 aa).

Residue K106 is the Schiff-base intermediate with DXP of the active site. Residues G167, 193–194 (AG), and 215–216 (NS) contribute to the 1-deoxy-D-xylulose 5-phosphate site.

This sequence belongs to the ThiG family. In terms of assembly, homotetramer. Forms heterodimers with either ThiH or ThiS.

The protein resides in the cytoplasm. The catalysed reaction is [ThiS sulfur-carrier protein]-C-terminal-Gly-aminoethanethioate + 2-iminoacetate + 1-deoxy-D-xylulose 5-phosphate = [ThiS sulfur-carrier protein]-C-terminal Gly-Gly + 2-[(2R,5Z)-2-carboxy-4-methylthiazol-5(2H)-ylidene]ethyl phosphate + 2 H2O + H(+). The protein operates within cofactor biosynthesis; thiamine diphosphate biosynthesis. In terms of biological role, catalyzes the rearrangement of 1-deoxy-D-xylulose 5-phosphate (DXP) to produce the thiazole phosphate moiety of thiamine. Sulfur is provided by the thiocarboxylate moiety of the carrier protein ThiS. In vitro, sulfur can be provided by H(2)S. This Stutzerimonas stutzeri (strain A1501) (Pseudomonas stutzeri) protein is Thiazole synthase.